Here is a 154-residue protein sequence, read N- to C-terminus: Deoxyuridine 5'-triphosphate nucleotidohydrolase (154 aa).

Residues 64-66 (RSG), Asn-77, 81-83 (TVD), and Lys-91 contribute to the substrate site.

This sequence belongs to the dUTPase family. In terms of assembly, homotrimer. Requires Mg(2+) as cofactor.

The enzyme catalyses dUTP + H2O = dUMP + diphosphate + H(+). The protein operates within pyrimidine metabolism; dUMP biosynthesis; dUMP from dCTP (dUTP route): step 2/2. In terms of biological role, this enzyme is involved in nucleotide metabolism: it produces dUMP, the immediate precursor of thymidine nucleotides and it decreases the intracellular concentration of dUTP so that uracil cannot be incorporated into DNA. This chain is Deoxyuridine 5'-triphosphate nucleotidohydrolase, found in Mycobacterium leprae (strain Br4923).